A 92-amino-acid chain; its full sequence is C-C motif chemokine 4 (92 aa).

Residues 1 to 23 (MKLCVTVLSLLVLVAAFCSPALS) form the signal peptide. 2 cysteine pairs are disulfide-bonded: Cys34/Cys58 and Cys35/Cys74.

It belongs to the intercrine beta (chemokine CC) family. In terms of assembly, homodimer. Interacts with CCR5.

The protein localises to the secreted. Its function is as follows. Monokine with inflammatory and chemokinetic properties. The protein is C-C motif chemokine 4 (CCL4) of Sus scrofa (Pig).